We begin with the raw amino-acid sequence, 108 residues long: Probable endonuclease 4 (108 aa).

5 residues coordinate Zn(2+): His2, His36, Asp49, His51, and Glu81.

Belongs to the AP endonuclease 2 family. Zn(2+) is required as a cofactor.

It carries out the reaction Endonucleolytic cleavage to 5'-phosphooligonucleotide end-products.. In terms of biological role, endonuclease IV plays a role in DNA repair. It cleaves phosphodiester bonds at apurinic or apyrimidinic (AP) sites, generating a 3'-hydroxyl group and a 5'-terminal sugar phosphate. The protein is Probable endonuclease 4 (nfo) of Thermotoga neapolitana.